The primary structure comprises 1236 residues: DNA topoisomerase 2 (1236 aa).

Residues N65, N96, 124-126, 137-144, and 354-356 each bind ATP; these read SSN, GRHGYGAK, and QSK. The Toprim domain occupies 434 to 548; sequence RTLIITEGDS…KLLQNNPGYI (115 aa). 3 residues coordinate Mg(2+): E440, D517, and D519. Positions 685–1101 constitute a Topo IIA-type catalytic domain; that stretch reads IPHCVDGLKP…TPVKMWLTEL (417 aa). Y775 (O-(5'-phospho-DNA)-tyrosine intermediate) is an active-site residue. The segment at 956-965 is interaction with DNA; the sequence is ALAQRIYING. The tract at residues 1161–1211 is disordered; it reads YEKPPPSKRRPGESVGGARPSDSAARTVGKRLVGSRSEFKNKKPMSRKNNV.

It belongs to the type II topoisomerase family. Homodimer. The cofactor is Mg(2+). It depends on Mn(2+) as a cofactor. Requires Ca(2+) as cofactor.

It is found in the nucleus. It carries out the reaction ATP-dependent breakage, passage and rejoining of double-stranded DNA.. Its function is as follows. Control of topological states of DNA by transient breakage and subsequent rejoining of DNA strands. Topoisomerase II makes double-strand breaks. The protein is DNA topoisomerase 2 (TOP2) of Leishmania chagasi.